The sequence spans 499 residues: Cytochrome P450 76T24 (499 aa).

Residues 3–23 (VDILLSLVLAFFGWAAIYFLT) form a helical membrane-spanning segment. N-linked (GlcNAc...) asparagine glycosylation is found at asparagine 55, asparagine 76, asparagine 279, and asparagine 284. Position 442 (cysteine 442) interacts with heme.

It belongs to the cytochrome P450 family.

The protein localises to the membrane. The sequence is that of Cytochrome P450 76T24 from Catharanthus roseus (Madagascar periwinkle).